A 299-amino-acid chain; its full sequence is Elongation factor Ts (299 aa).

Residues 82 to 85 (TDFV) are involved in Mg(2+) ion dislocation from EF-Tu.

It belongs to the EF-Ts family.

It is found in the cytoplasm. In terms of biological role, associates with the EF-Tu.GDP complex and induces the exchange of GDP to GTP. It remains bound to the aminoacyl-tRNA.EF-Tu.GTP complex up to the GTP hydrolysis stage on the ribosome. The chain is Elongation factor Ts from Dechloromonas aromatica (strain RCB).